A 433-amino-acid polypeptide reads, in one-letter code: Tol-Pal system protein TolB (433 aa).

Residues 1–21 (MIKRLRGLLVLLCCVAGMAMA) form the signal peptide.

It belongs to the TolB family. As to quaternary structure, the Tol-Pal system is composed of five core proteins: the inner membrane proteins TolA, TolQ and TolR, the periplasmic protein TolB and the outer membrane protein Pal. They form a network linking the inner and outer membranes and the peptidoglycan layer.

Its subcellular location is the periplasm. Functionally, part of the Tol-Pal system, which plays a role in outer membrane invagination during cell division and is important for maintaining outer membrane integrity. This is Tol-Pal system protein TolB from Pseudomonas entomophila (strain L48).